Here is a 160-residue protein sequence, read N- to C-terminus: 2-C-methyl-D-erythritol 2,4-cyclodiphosphate synthase (160 aa).

A divalent metal cation-binding residues include Asp-10 and His-12. 4-CDP-2-C-methyl-D-erythritol 2-phosphate-binding positions include 10-12 (DVH) and 36-37 (HS). An a divalent metal cation-binding site is contributed by His-44. 4-CDP-2-C-methyl-D-erythritol 2-phosphate is bound by residues 58-60 (DIG), 134-137 (TTTE), Phe-141, and Arg-144.

This sequence belongs to the IspF family. As to quaternary structure, homotrimer. Requires a divalent metal cation as cofactor.

It catalyses the reaction 4-CDP-2-C-methyl-D-erythritol 2-phosphate = 2-C-methyl-D-erythritol 2,4-cyclic diphosphate + CMP. It participates in isoprenoid biosynthesis; isopentenyl diphosphate biosynthesis via DXP pathway; isopentenyl diphosphate from 1-deoxy-D-xylulose 5-phosphate: step 4/6. In terms of biological role, involved in the biosynthesis of isopentenyl diphosphate (IPP) and dimethylallyl diphosphate (DMAPP), two major building blocks of isoprenoid compounds. Catalyzes the conversion of 4-diphosphocytidyl-2-C-methyl-D-erythritol 2-phosphate (CDP-ME2P) to 2-C-methyl-D-erythritol 2,4-cyclodiphosphate (ME-CPP) with a corresponding release of cytidine 5-monophosphate (CMP). This Phocaeicola vulgatus (strain ATCC 8482 / DSM 1447 / JCM 5826 / CCUG 4940 / NBRC 14291 / NCTC 11154) (Bacteroides vulgatus) protein is 2-C-methyl-D-erythritol 2,4-cyclodiphosphate synthase.